A 529-amino-acid chain; its full sequence is MATPDVSVHMEEVVVVTTPDTAVDGSGVEEVKTVLVTTNLAPHGGDLTEDNMETENAAAAACAFTASSQLKEAVLVKMAEEGENLEAEIVYPITCGDSRANLIWRKFVCPGINVKCVQYDEHVISPKEFVHLAGKSTLKDWKRAIRMNGIMLRKIMDSGELDFYQHDKVCSNTCRSTKIDLSGARVSLSSPTSTEYIPLTPAAADVNGSPATITIETCEDPGDWTTTIGDDTFAFWRGLKDAGLLDEVIQEFQQELEETMKGLQQRVQDPPLQLRDAVLLNNIVQNFGMLDLVKKVLASHKCQMDRSREQYARDLAALEQQCDEHRRRAKELKHKSQHLSNVLMTLTPVSLPSPMKRPRLARATSGPAAMASQVLTQSAQIALGPGMPMSQLTSVPLGKVVSTLPSTVLGKGSPQAAPASSPASPLLGGYTVLASSGSTFPSTVEIHPDTSSLTVLSTAAMQDGTTVLKVVSPLQLLTLPGLGPTLQNVAQASPAGSTIVTMPTAAATGPEEHTATIEVAAVAEDHEQK.

The region spanning 80-162 (EEGENLEAEI…RKIMDSGELD (83 aa)) is the SAND domain. Zn(2+) is bound at residue Cys109. DNA-binding residues include Lys135, Lys139, Lys142, and Arg153. Lys154 participates in a covalent cross-link: Glycyl lysine isopeptide (Lys-Gly) (interchain with G-Cter in SUMO1); alternate. Residue Lys154 forms a Glycyl lysine isopeptide (Lys-Gly) (interchain with G-Cter in SUMO2); alternate linkage. Residues His166, Cys170, and Cys174 each contribute to the Zn(2+) site. Positions 244-347 (LLDEVIQEFQ…HLSNVLMTLT (104 aa)) form a coiled coil. Ser372 bears the Phosphoserine mark.

As to quaternary structure, homodimer, and heterodimer of GMEB1 and GMEB2. Interacts with the glucocorticoid receptor (NR3C1). May interact with CREB-binding protein (CBP).

The protein localises to the nucleus. The protein resides in the cytoplasm. Functionally, trans-acting factor that binds to glucocorticoid modulatory elements (GME) present in the TAT (tyrosine aminotransferase) promoter and increases sensitivity to low concentrations of glucocorticoids. Also binds to the transferrin receptor promoter. This chain is Glucocorticoid modulatory element-binding protein 2 (Gmeb2), found in Rattus norvegicus (Rat).